Consider the following 206-residue polypeptide: Ras-related protein Ral-A (206 aa).

A GTP-binding site is contributed by 21–28 (GSGGVGKS). An Effector region motif is present at residues 43–51 (YEPTKADSY). GTP-binding positions include 68–72 (DTAGQ) and 127–130 (NKSD). Ser194 is subject to Phosphoserine. Cys203 carries the cysteine methyl ester modification. Residue Cys203 is the site of S-geranylgeranyl cysteine attachment. A propeptide spans 204–206 (CIL) (removed in mature form).

Belongs to the small GTPase superfamily. Ras family. In terms of assembly, interacts (via effector domain) with RALBP1; during mitosis, recruits RALBP1 to the mitochondrion where it promotes DNM1L phosphorylation and mitochondrial fission. Interacts with EXOC2/Sec5 and EXOC8/Exo84; binding to EXOC2 and EXOC8 is mutually exclusive. Interacts with Clostridium exoenzyme C3. Interacts with RALGPS1. Interacts with LPAR1 and LPAR2. Interacts with GRK2 in response to LPAR1 activation. RALA and GRK2 binding to LPAR1 is mutually exclusive. Interacts with CDC42. Prenylation is essential for membrane localization. Post-translationally, phosphorylated. Phosphorylation at Ser-194 by AURKA/Aurora kinase A, during mitosis, induces RALA localization to the mitochondrion where it regulates mitochondrial fission.

It localises to the cell membrane. Its subcellular location is the cleavage furrow. It is found in the midbody. The protein resides in the midbody ring. The protein localises to the mitochondrion. The enzyme catalyses GTP + H2O = GDP + phosphate + H(+). Its activity is regulated as follows. Alternates between an inactive form bound to GDP and an active form bound to GTP. Activated by a guanine nucleotide-exchange factor (GEF) and inactivated by a GTPase-activating protein (GAP). In terms of biological role, multifunctional GTPase involved in a variety of cellular processes including gene expression, cell migration, cell proliferation, oncogenic transformation and membrane trafficking. Accomplishes its multiple functions by interacting with distinct downstream effectors. Acts as a GTP sensor for GTP-dependent exocytosis of dense core vesicles. Key regulator of LPAR1 signaling and competes with GRK2 for binding to LPAR1 thus affecting the signaling properties of the receptor. Required for anchorage-independent proliferation of transformed cells. The RALA-exocyst complex regulates integrin-dependent membrane raft exocytosis and growth signaling. During mitosis, supports the stabilization and elongation of the intracellular bridge between dividing cells. Cooperates with EXOC2 to recruit other components of the exocyst to the early midbody. During mitosis, also controls mitochondrial fission by recruiting to the mitochondrion RALBP1, which mediates the phosphorylation and activation of DNM1L by the mitotic kinase cyclin B-CDK1. The protein is Ras-related protein Ral-A (Rala) of Mus musculus (Mouse).